The following is a 106-amino-acid chain: UPF0060 membrane protein Csal_2746 (106 aa).

Helical transmembrane passes span 6–26, 31–51, 59–79, and 85–105; these read LLFI…WLWL, SPWL…LLSL, VYAA…WGVD, and PTDW…ASGW.

Belongs to the UPF0060 family.

It localises to the cell inner membrane. This chain is UPF0060 membrane protein Csal_2746, found in Chromohalobacter salexigens (strain ATCC BAA-138 / DSM 3043 / CIP 106854 / NCIMB 13768 / 1H11).